Consider the following 477-residue polypeptide: MNEMTVKTRFAPSPTGALHLGNLRTALFNALLAYGHGGRFVLRIEDTDRERYSPEATRSLMGDLRWLGLDWQEGPEVGGPAPPYHQFERGFLYDAYYRQLEAEGWAYPCFCSERELEMARRAQRSAGQPPRYPGTCARLTAEEVARKRAEGMQPALRFRVPSGDEVRFEDRIHGEQRFRTDDIGDFIIRRADGTAAYLFTNAVDDALMGITDVLRGDDHLTNTPRQLLILQALGLAAPRYGHMGLITGNDGAPLSKRNGSRSVGELARDGYLPEAMLNYLARVGHTCESEALLDLAGLAEGFDPARISTAPSRFDPDHLRHWQEEAVHGSSVRRLRPWMGIDALVPPGYAEDLVNAVRGNVRFPAEARDWAKRVFAGPPELDADAEAAIVSAGAEFFEAAAGAAEEGYTRFKGLTEAVKERTGVKGKQLFMPLRAALTGRCSGPELQPVVDLMGGERVVERLRRAATLAAEQGAQGE.

The 'HIGH' region signature appears at P12–N22. The 'KMSKS' region signature appears at P253 to R257. K256 lines the ATP pocket.

This sequence belongs to the class-I aminoacyl-tRNA synthetase family. Glutamate--tRNA ligase type 1 subfamily. Monomer.

It localises to the cytoplasm. The enzyme catalyses tRNA(Glu) + L-glutamate + ATP = L-glutamyl-tRNA(Glu) + AMP + diphosphate. Functionally, catalyzes the attachment of glutamate to tRNA(Glu) in a two-step reaction: glutamate is first activated by ATP to form Glu-AMP and then transferred to the acceptor end of tRNA(Glu). The polypeptide is Glutamate--tRNA ligase 1 (Halorhodospira halophila (strain DSM 244 / SL1) (Ectothiorhodospira halophila (strain DSM 244 / SL1))).